The following is a 34-amino-acid chain: Photosystem II reaction center protein T (34 aa).

The helical transmembrane segment at 3-23 threads the bilayer; the sequence is ALVYTFLLVGTLGIIFFAIFF.

Belongs to the PsbT family. As to quaternary structure, PSII is composed of 1 copy each of membrane proteins PsbA, PsbB, PsbC, PsbD, PsbE, PsbF, PsbH, PsbI, PsbJ, PsbK, PsbL, PsbM, PsbT, PsbY, PsbZ, Psb30/Ycf12, at least 3 peripheral proteins of the oxygen-evolving complex and a large number of cofactors. It forms dimeric complexes.

The protein resides in the plastid. It is found in the chloroplast thylakoid membrane. In terms of biological role, found at the monomer-monomer interface of the photosystem II (PS II) dimer, plays a role in assembly and dimerization of PSII. PSII is a light-driven water plastoquinone oxidoreductase, using light energy to abstract electrons from H(2)O, generating a proton gradient subsequently used for ATP formation. This Klebsormidium bilatum (Filamentous green alga) protein is Photosystem II reaction center protein T.